The sequence spans 265 residues: Undecaprenyl-diphosphatase (265 aa).

8 consecutive transmembrane segments (helical) span residues 7-27 (IIVSIIIGVIEGITEFLPISS), 45-65 (TKILEIFIEFGSALSILYFFH), 86-106 (LHIILAILPTIFFGLLFYKKI), 108-128 (LLFNTYNVMYALILGGIFLLI), 145-165 (ISLLQSAIIGFFQIFCLYPGF), 186-206 (IEFSFIISIPLIMGASFYDFI), 214-234 (ILDLPIFFIGFMISFIVSILC), and 245-265 (TSLIFFGIYRFIISGLIYFIN).

It belongs to the UppP family.

It is found in the cell membrane. The catalysed reaction is di-trans,octa-cis-undecaprenyl diphosphate + H2O = di-trans,octa-cis-undecaprenyl phosphate + phosphate + H(+). Functionally, catalyzes the dephosphorylation of undecaprenyl diphosphate (UPP). Confers resistance to bacitracin. In Buchnera aphidicola subsp. Acyrthosiphon pisum (strain Tuc7), this protein is Undecaprenyl-diphosphatase.